Reading from the N-terminus, the 462-residue chain is MENKKENFSEWYNEIITLAELSDKRYPVKGMNVWLPYGWKIMSLIDSIVRRAVDKRNFQEVNFPILIGRSMLEVEFEHIRGFENEIYWVTKGGKEKLEEELALRPTSESAMYPMFSLWIRSHADLPLKIYQIVSVYRYETKHTRSFIRIREIHFFEAHTAHATYEDAEAQMDQYKEIWREISSLLCLPYFYDQRPDWDKFPGAMYTIAFDTVLPSGRSLQIGTIHQYGTNFSKNYDIKYLKEDGTFDYAHQTTYGMSERLLAAIIGIHGDDKGLVLPPDVAPIQVIIIPIPGAGVMEYARDVENTLNSINIRVKVDDRENYTPGYKFNDWEMRGVPLRIEIGEREVKNRTLTISMRNIQGKLTIERSKLIYEVPDTLIRIREKMMENAQKVFKDHVFRATKLEEFNRDGLITAFWCGSKECSDKIEAETEKSVLGFMVDSSETGKCVVCGKNGKMAVFSRSY.

This sequence belongs to the class-II aminoacyl-tRNA synthetase family. ProS type 3 subfamily. Homodimer.

It localises to the cytoplasm. It catalyses the reaction tRNA(Pro) + L-proline + ATP = L-prolyl-tRNA(Pro) + AMP + diphosphate. Its function is as follows. Catalyzes the attachment of proline to tRNA(Pro) in a two-step reaction: proline is first activated by ATP to form Pro-AMP and then transferred to the acceptor end of tRNA(Pro). This is Proline--tRNA ligase from Thermoplasma acidophilum (strain ATCC 25905 / DSM 1728 / JCM 9062 / NBRC 15155 / AMRC-C165).